Consider the following 423-residue polypeptide: Gamma-glutamyl phosphate reductase (423 aa).

This sequence belongs to the gamma-glutamyl phosphate reductase family.

The protein resides in the cytoplasm. The enzyme catalyses L-glutamate 5-semialdehyde + phosphate + NADP(+) = L-glutamyl 5-phosphate + NADPH + H(+). It participates in amino-acid biosynthesis; L-proline biosynthesis; L-glutamate 5-semialdehyde from L-glutamate: step 2/2. Catalyzes the NADPH-dependent reduction of L-glutamate 5-phosphate into L-glutamate 5-semialdehyde and phosphate. The product spontaneously undergoes cyclization to form 1-pyrroline-5-carboxylate. This Pseudomonas putida (strain ATCC 47054 / DSM 6125 / CFBP 8728 / NCIMB 11950 / KT2440) protein is Gamma-glutamyl phosphate reductase.